Here is a 617-residue protein sequence, read N- to C-terminus: ATP-dependent RNA helicase DBP1 (617 aa).

Residues 1–90 (MADLPQKVSN…TSANYNRGGS (90 aa)) form a disordered region. The span at 7 to 17 (KVSNLSINNKE) shows a compositional bias: polar residues. The span at 38–58 (PSFERSTPKQEDKVTGGDFFR) shows a compositional bias: basic and acidic residues. The segment covering 79 to 90 (GGTSANYNRGGS) has biased composition (polar residues). The short motif at 154 to 182 (LDFSSPPLDELLMENIKLASFTKPTPVQK) is the Q motif element. Residues 185-374 (IPIVTKGRDL…RDFLDNYIFL (190 aa)) form the Helicase ATP-binding domain. 198 to 205 (AQTGSGKT) contacts ATP. The short motif at 318-321 (DEAD) is the DEAD box element. In terms of domain architecture, Helicase C-terminal spans 385–545 (NITQRILYVD…EVPTFLSDLS (161 aa)). A disordered region spans residues 542-617 (SDLSRQNSRG…GYGNSNASWW (76 aa)). A compositionally biased stretch (polar residues) spans 580–594 (FGSTRPRNTGTSNWG).

Belongs to the DEAD box helicase family. DDX3/DED1 subfamily.

The protein localises to the cytoplasm. It carries out the reaction ATP + H2O = ADP + phosphate + H(+). Its function is as follows. ATP-binding RNA helicase involved in translation initiation. Remodels RNA in response to ADP and ATP concentrations by facilitating disruption, but also formation of RNA duplexes. Redundant to DED1, may be required in conditions in which DED1 expression is decreased. This Saccharomyces cerevisiae (strain ATCC 204508 / S288c) (Baker's yeast) protein is ATP-dependent RNA helicase DBP1 (DBP1).